We begin with the raw amino-acid sequence, 575 residues long: uncharacterized protein (575 aa).

The region spanning 1–120 is the HTH marR-type domain; it reads MKLIEHYVAL…YNMWLSEVFG (120 aa). Positions 26-49 form a DNA-binding region, H-T-H motif; that stretch reads LTEIADCLFCTERNAKLILHKLEN. A solute-binding region region spans residues 176–490; it reads EPKPHLVHGW…FGFLHLLLSE (315 aa).

This sequence in the C-terminal section; belongs to the bacterial solute-binding protein 5 family.

This is an uncharacterized protein from Bacillus subtilis (strain 168).